A 205-amino-acid polypeptide reads, in one-letter code: Max-like protein homolog 2 (205 aa).

Low complexity-rich tracts occupy residues 1–12 (MSRSRSAAASSS) and 26–40 (SASS…ATNS). A disordered region spans residues 1 to 58 (MSRSRSAAASSSQKPDDMDLMSPDGSASSPSAPNTPATNSGGFSSDRKKATHLRCERQ). The span at 45–58 (SDRKKATHLRCERQ) shows a compositional bias: basic and acidic residues. A basic motif region spans residues 47–60 (RKKATHLRCERQRR). Positions 47 to 101 (RKKATHLRCERQRREAINSGYSDLKDLIPQTTTSLGCKTTNAAILFRACDFMSQL) constitute a bHLH domain. Positions 61–101 (EAINSGYSDLKDLIPQTTTSLGCKTTNAAILFRACDFMSQL) are helix-loop-helix motif. Positions 98–132 (MSQLKTDISDADKQLAQLNAQAAALEMIASEYEQM) form a coiled coil.

Widely expressed.

It is found in the nucleus. The protein resides in the cytoplasm. Its subcellular location is the mitochondrion. In terms of biological role, transcription factor. Binds to the E box motif 5'-CACGTG-3', probably in a heterodimeric complex with mml-1. Involved in modulating longevity in response to TOR signaling, dietary restriction, the decline in protein homeostasis associated with normal aging, germline signaling and the insulin-like signaling pathway. Plays a role in autophagy. Involved in regulating migration of the ray 1 precursor cells in the male tail, acting in concert with Wnt and semaphorin signaling pathways. Regulates transcription of genes encoding extracellular matrix (ECM) components which may contribute to the substratum required for migration of the neighboring ray 1 precursor cells. Required for resistance to oxidative stress. Involved in promoting infection by the microsporidian pathogen N.parisii, probably acting independently of its canonical partner, mml-1. The polypeptide is Max-like protein homolog 2 (Caenorhabditis elegans).